The following is a 435-amino-acid chain: Nuclear receptor subfamily 6 group A member 1 (435 aa).

Residues glutamine 11–glutamate 86 constitute a DNA-binding region (nuclear receptor). 2 consecutive NR C4-type zinc fingers follow at residues cysteine 14–cysteine 34 and cysteine 50–cysteine 69. Residues isoleucine 84–methionine 157 are disordered. Positions asparagine 121–glutamate 141 are enriched in polar residues. Positions serine 142 to serine 156 are enriched in low complexity. One can recognise an NR LBD domain in the interval glutamine 204–glutamate 435.

This sequence belongs to the nuclear hormone receptor family. NR6 subfamily. In terms of assembly, homodimer.

Its subcellular location is the cytoplasm. It localises to the nucleus. Functionally, probable orphan nuclear receptor. Binds to a response element containing repeats of the motif 5'-AGGTCA-3'. Required for anterior-posterior patterning during organogenesis. Acts with chordin to play a role in patterning the midbrain-hindbrain. Isoform Em is required for integrin-mediated cell matrix interaction during neurulation and for the morphogenetic movements leading to formation of the neural tube. Also mediates the effect of retinoic acid on primary neurogenesis. The protein is Nuclear receptor subfamily 6 group A member 1 of Xenopus tropicalis (Western clawed frog).